A 347-amino-acid polypeptide reads, in one-letter code: Gamma-glutamyl hydrolase B (347 aa).

The signal sequence occupies residues 1-22; the sequence is MIKLFSLFIYLYLISNLKLINT. A Gamma-glutamyl hydrolase domain is found at 23-314; it reads INNTPVIGIL…THVEQIYIFN (292 aa). Cysteine 128 (nucleophile) is an active-site residue. N-linked (GlcNAc...) asparagine glycosylation is found at asparagine 152, asparagine 158, and asparagine 201. Histidine 240 serves as the catalytic Proton donor. Residues asparagine 273, asparagine 314, and asparagine 318 are each glycosylated (N-linked (GlcNAc...) asparagine).

It belongs to the peptidase C26 family.

Its subcellular location is the secreted. It is found in the extracellular space. It catalyses the reaction (6S)-5,6,7,8-tetrahydrofolyl-(gamma-L-Glu)(n) + (n-1) H2O = (6S)-5,6,7,8-tetrahydrofolate + (n-1) L-glutamate. The polypeptide is Gamma-glutamyl hydrolase B (gghB) (Dictyostelium discoideum (Social amoeba)).